A 258-amino-acid polypeptide reads, in one-letter code: UPF0246 protein YE0603 (258 aa).

The protein belongs to the UPF0246 family.

This is UPF0246 protein YE0603 from Yersinia enterocolitica serotype O:8 / biotype 1B (strain NCTC 13174 / 8081).